Reading from the N-terminus, the 571-residue chain is Proline--tRNA ligase (571 aa).

This sequence belongs to the class-II aminoacyl-tRNA synthetase family. ProS type 1 subfamily. Homodimer.

Its subcellular location is the cytoplasm. It carries out the reaction tRNA(Pro) + L-proline + ATP = L-prolyl-tRNA(Pro) + AMP + diphosphate. In terms of biological role, catalyzes the attachment of proline to tRNA(Pro) in a two-step reaction: proline is first activated by ATP to form Pro-AMP and then transferred to the acceptor end of tRNA(Pro). As ProRS can inadvertently accommodate and process non-cognate amino acids such as alanine and cysteine, to avoid such errors it has two additional distinct editing activities against alanine. One activity is designated as 'pretransfer' editing and involves the tRNA(Pro)-independent hydrolysis of activated Ala-AMP. The other activity is designated 'posttransfer' editing and involves deacylation of mischarged Ala-tRNA(Pro). The misacylated Cys-tRNA(Pro) is not edited by ProRS. The protein is Proline--tRNA ligase of Buchnera aphidicola subsp. Schizaphis graminum (strain Sg).